A 137-amino-acid polypeptide reads, in one-letter code: ATP synthase epsilon chain, sodium ion specific (137 aa).

Belongs to the ATPase epsilon chain family. F-type ATPases have 2 components, CF(1) - the catalytic core - and CF(0) - the membrane proton channel. CF(1) has five subunits: alpha(3), beta(3), gamma(1), delta(1), epsilon(1). CF(0) has three main subunits: a, b and c.

Its subcellular location is the cell inner membrane. In terms of biological role, produces ATP from ADP in the presence of a sodium gradient across the membrane. This is ATP synthase epsilon chain, sodium ion specific (atpC) from Propionigenium modestum.